We begin with the raw amino-acid sequence, 247 residues long: PF03932 family protein CutC (247 aa).

The protein belongs to the CutC family.

The protein resides in the cytoplasm. In Klebsiella pneumoniae (strain 342), this protein is PF03932 family protein CutC.